A 722-amino-acid chain; its full sequence is MEDRLQMDNGLIAQKIVSVHLKDPALKELGKASDKQVQGPPPGPEASPEAQPAQGVMEHAGQGDCKAAGEGPSPRRRGCAPESEPAADGDPGLSSPELCQLHLSICHECLELENSTIDSVRSASAENIPDLPCDHSGVEGAAGELCPERKGKRVNISGKAPNILLYVGSGSEEALGRLQQVRSVLTDCVDTDSYTLYHLLEDSALRDPWSDNCLLLVIASRDPIPKDIQHKFMAYLSQGGKVLGLSSPFTLGGFRVTRRDVLRNTVQNLVFSKADGTEVRLSVLSSGYVYEEGPSLGRLQGHLENEDKDKMIVHVPFGTLGGEAVLCQVHLELPPGASLVQTADDFNVLKSSNVRRHEVLKEILTALGLSCDAPQVPALTPLYLLLAAEETQDPFMQWLGRHTDPEGIIKSSKLSLQFVSSYTSEAEITPSSMPVVTDPEAFSSEHFSLETYRQNLQTTRLGKVILFAEVTSTTMSLLDGLMFEMPQEMGLIAIAVRQTQGKGRGPNAWLSPVGCALSTLLVFIPLRSQLGQRIPFVQHLMSLAVVEAVRSIPGYEDINLRVKWPNDIYYSDLMKIGGVLVNSTLMGETFYILIGCGFNVTNSNPTICINDLIEEHNKQHGAGLKPLRADCLIARAVTVLEKLIDRFQDQGPDGVLPLYYKYWVHGGQQVRLGSTEGPQASIVGLDDSGFLQVHQEDGGVVTVHPDGNSFDMLRNLIVPKRQ.

The segment at 27 to 93 is disordered; sequence KELGKASDKQ…EPAADGDPGL (67 aa). A compositionally biased stretch (low complexity) spans 46–55; that stretch reads ASPEAQPAQG. A Phosphoserine modification is found at serine 295. Residues 459–648 form the BPL/LPL catalytic domain; sequence TRLGKVILFA…VLEKLIDRFQ (190 aa).

The protein belongs to the biotin--protein ligase family. In terms of assembly, monomer.

The protein resides in the cytoplasm. Its subcellular location is the mitochondrion. It carries out the reaction apo-[methylmalonyl-CoA:pyruvate carboxytransferase] + biotin + ATP = holo-[methylmalonyl-CoA:pyruvate carboxytransferase] + AMP + diphosphate + H(+). It catalyses the reaction apo-[propionyl-CoA:carbon-dioxide ligase (ADP-forming)] + biotin + ATP = holo-[propionyl-CoA:carbon-dioxide ligase (ADP-forming)] + AMP + diphosphate + H(+). The enzyme catalyses apo-[3-methylcrotonoyl-CoA:carbon-dioxide ligase (ADP-forming)] + biotin + ATP = holo-[3-methylcrotonoyl-CoA:carbon-dioxide ligase (ADP-forming)] + AMP + diphosphate + H(+). The catalysed reaction is biotin + L-lysyl-[protein] + ATP = N(6)-biotinyl-L-lysyl-[protein] + AMP + diphosphate + H(+). In terms of biological role, biotin--protein ligase catalyzing the biotinylation of the 4 biotin-dependent carboxylases acetyl-CoA-carboxylase, pyruvate carboxylase, propionyl-CoA carboxylase, and methylcrotonyl-CoA carboxylase. This chain is Biotin--protein ligase, found in Mus musculus (Mouse).